The following is a 351-amino-acid chain: Methylthioribose-1-phosphate isomerase (351 aa).

Residues 55-57, R95, and Q202 each bind substrate; that span reads RGA. Residue D243 is the Proton donor of the active site. 253 to 254 serves as a coordination point for substrate; sequence NK.

Belongs to the eIF-2B alpha/beta/delta subunits family. MtnA subfamily.

The catalysed reaction is 5-(methylsulfanyl)-alpha-D-ribose 1-phosphate = 5-(methylsulfanyl)-D-ribulose 1-phosphate. It participates in amino-acid biosynthesis; L-methionine biosynthesis via salvage pathway; L-methionine from S-methyl-5-thio-alpha-D-ribose 1-phosphate: step 1/6. Functionally, catalyzes the interconversion of methylthioribose-1-phosphate (MTR-1-P) into methylthioribulose-1-phosphate (MTRu-1-P). This is Methylthioribose-1-phosphate isomerase from Marinobacter nauticus (strain ATCC 700491 / DSM 11845 / VT8) (Marinobacter aquaeolei).